The primary structure comprises 145 residues: Plastocyanin, chloroplastic (145 aa).

The transit peptide at 1–48 directs the protein to the chloroplast; sequence MASLMRKAAVAPAKATRTTVKASASLQRVAQAAGVAVAGFSLALSANA. Positions 49 to 145 constitute a Plastocyanin-like domain; it reads ANVKLGADSG…AGMVGKVIVQ (97 aa). Residues His85, Cys130, His133, and Met138 each contribute to the Cu cation site.

The protein belongs to the plastocyanin family. Cu(2+) serves as cofactor.

Its subcellular location is the plastid. The protein resides in the chloroplast thylakoid membrane. Functionally, participates in electron transfer between P700 and the cytochrome b6-f complex in photosystem I. The protein is Plastocyanin, chloroplastic (PETE) of Tetradesmus obliquus (Green alga).